Reading from the N-terminus, the 157-residue chain is Ribosomal RNA large subunit methyltransferase H (157 aa).

Residues G104 and 123–128 contribute to the S-adenosyl-L-methionine site; that span reads LSSLTL.

It belongs to the RNA methyltransferase RlmH family. In terms of assembly, homodimer.

The protein resides in the cytoplasm. The enzyme catalyses pseudouridine(1915) in 23S rRNA + S-adenosyl-L-methionine = N(3)-methylpseudouridine(1915) in 23S rRNA + S-adenosyl-L-homocysteine + H(+). Functionally, specifically methylates the pseudouridine at position 1915 (m3Psi1915) in 23S rRNA. In Nitrosococcus oceani (strain ATCC 19707 / BCRC 17464 / JCM 30415 / NCIMB 11848 / C-107), this protein is Ribosomal RNA large subunit methyltransferase H.